The following is a 313-amino-acid chain: Ribosomal RNA small subunit methyltransferase H (313 aa).

S-adenosyl-L-methionine contacts are provided by residues 35–37 (GGH), Asp-55, Phe-81, Asp-103, and Gln-110.

The protein belongs to the methyltransferase superfamily. RsmH family.

Its subcellular location is the cytoplasm. The catalysed reaction is cytidine(1402) in 16S rRNA + S-adenosyl-L-methionine = N(4)-methylcytidine(1402) in 16S rRNA + S-adenosyl-L-homocysteine + H(+). Its function is as follows. Specifically methylates the N4 position of cytidine in position 1402 (C1402) of 16S rRNA. The chain is Ribosomal RNA small subunit methyltransferase H from Pseudomonas aeruginosa (strain UCBPP-PA14).